We begin with the raw amino-acid sequence, 694 residues long: MTSPRKILVTSALPYANGPIHLGHLVEYIQTDIWVRFQKMRGHDCRYVCADDTHGTPIMLRAEKEGISPEELIARVHGEHLRDFTGFHIEFDNYYSTHSEETRAHAADIYGRLKDRGLIESRAIEQYFDPVKEMFLPDRFIKGECPKCHAKDQYGDSCEVCGTTYSPTDLINPYSVVSGAAPVRRESVHYFFKLGECAEFLKDWTRSGALQTEAANKLNEWFEAGLSDWDISRDAPYFGFEIPDAPGKYFYVWLDAPIGYMGSFQNLCDRLGLDFAEYWKKDSEAELYHFIGKDILYFHALFWPAMLEHSGFRTPTRIFAHGFLTVNGEKMSKSRGTFITAQSYLEQGLNPEWLRYYYACKLNGTMEDIDLSLEDFVARVNSDLVGKYINIASRTAGFVTKFFDGRLDVPMQLADGEALDFLIDRLRDSAEEISGYYDSRDYNKAIRKIMELADEVNIFVNEKKPWEIAKRDDSYSRGYLRVVCAITLNLFRLLTIYLKPILPRLAEAVEGFLKIPSLTWQDAQTLLPQGHTINDYQHLMTRIDPKQVDALVEANRQSLQATAGQPEPHSQVRHAEHQQRQVQPIAETISIDDFAKVDLRIARIANAEHVEGADKLLKLTLDLGGETRTVFAGIKSAYAPETLIGRLTVMVANLAPRKMKFGLSEGMVLAAGPGGGDIFLLSPDEGAQPGMKVK.

The short motif at 14-24 (PYANGPIHLGH) is the 'HIGH' region element. Zn(2+)-binding residues include cysteine 145, cysteine 148, cysteine 158, and cysteine 161. Positions 330–334 (KMSKS) match the 'KMSKS' region motif. Lysine 333 contacts ATP. The segment at 558–579 (SLQATAGQPEPHSQVRHAEHQQ) is disordered. Residues 593 to 694 (DFAKVDLRIA…EGAQPGMKVK (102 aa)) form the tRNA-binding domain.

The protein belongs to the class-I aminoacyl-tRNA synthetase family. MetG type 1 subfamily. Homodimer. Zn(2+) serves as cofactor.

The protein localises to the cytoplasm. The enzyme catalyses tRNA(Met) + L-methionine + ATP = L-methionyl-tRNA(Met) + AMP + diphosphate. Functionally, is required not only for elongation of protein synthesis but also for the initiation of all mRNA translation through initiator tRNA(fMet) aminoacylation. In Methylococcus capsulatus (strain ATCC 33009 / NCIMB 11132 / Bath), this protein is Methionine--tRNA ligase.